The chain runs to 157 residues: Protein Smg homolog (157 aa).

This sequence belongs to the Smg family.

This Xanthomonas euvesicatoria pv. vesicatoria (strain 85-10) (Xanthomonas campestris pv. vesicatoria) protein is Protein Smg homolog.